Here is a 482-residue protein sequence, read N- to C-terminus: Hydroxymethylglutaryl-CoA synthase A (482 aa).

Glutamate 85 functions as the Proton donor/acceptor in the catalytic mechanism. Catalysis depends on cysteine 119, which acts as the Acyl-thioester intermediate. Cysteine 119, threonine 161, serine 211, histidine 249, lysine 258, asparagine 325, and serine 358 together coordinate (3S)-3-hydroxy-3-methylglutaryl-CoA. Histidine 249 acts as the Proton donor/acceptor in catalysis.

This sequence belongs to the thiolase-like superfamily. HMG-CoA synthase family.

The catalysed reaction is acetoacetyl-CoA + acetyl-CoA + H2O = (3S)-3-hydroxy-3-methylglutaryl-CoA + CoA + H(+). It participates in metabolic intermediate biosynthesis; (R)-mevalonate biosynthesis; (R)-mevalonate from acetyl-CoA: step 2/3. Its function is as follows. Condenses acetyl-CoA with acetoacetyl-CoA to form HMG-CoA, which is the substrate for HMG-CoA reductase. This Dictyostelium discoideum (Social amoeba) protein is Hydroxymethylglutaryl-CoA synthase A (hgsA).